Here is a 344-residue protein sequence, read N- to C-terminus: Lipase chaperone (344 aa).

The chain crosses the membrane as a helical span at residues 14-34; the sequence is AVVYGVVGLAAIAGVAMWSGA. Positions 39-78 are disordered; it reads ATGASGESPEASVAGGSVTAPPQAAVPASTGLPPSLAGSS.

The protein belongs to the lipase chaperone family.

It localises to the cell inner membrane. In terms of biological role, may be involved in the folding of the extracellular lipase during its passage through the periplasm. This Pseudomonas sp. (strain KWI-56) protein is Lipase chaperone (lifO).